A 344-amino-acid chain; its full sequence is Phenylalanine--tRNA ligase alpha subunit (344 aa).

E256 is a binding site for Mg(2+).

It belongs to the class-II aminoacyl-tRNA synthetase family. Phe-tRNA synthetase alpha subunit type 1 subfamily. Tetramer of two alpha and two beta subunits. It depends on Mg(2+) as a cofactor.

The protein resides in the cytoplasm. It carries out the reaction tRNA(Phe) + L-phenylalanine + ATP = L-phenylalanyl-tRNA(Phe) + AMP + diphosphate + H(+). In Bacillus anthracis (strain CDC 684 / NRRL 3495), this protein is Phenylalanine--tRNA ligase alpha subunit.